Here is a 498-residue protein sequence, read N- to C-terminus: MYNLNALIDRLIEISKNNNLIEDMDTVYTRNRLLSIFNENSYTPCEEKLTLSFHETLNELINIAIEKKIIENALYSKDIFSSDIMNIFLPTPSLINKEFYKRYAISPKESTDYFYSLSKSSNYIRTDRIAKNINFKAPSKYGTMDITINLSKPEKDPKEIALARNSVKSNYPKCLLCIENEGYEGTVTHPDRANHRMIRLSLNDRTWMLQYSPYLYYNEHCIILSEDHVPMKIDISTFKNLLSFVDKFPHYFAGSNADLPIVGGSILSHEHYQGGNHRFPMNDAKKLFDFSIDGFEDVECEAIKWPISTIRLRGENIDSLVLASDLILKKWRDYSDETLDILSYSNSEMHNTITPMVRKEDGKFVVDLSLRNNRTSKEHPLGIFHPHEEVHHIKKENIGLIEVMGLAVLPGRLLKELEKIKEYLRDEISLDNIEEYHRPWALELKKKFDYLKSATDLNDFVNKELSNKFVSVLEHCGVFKLNEEGLEGFKRFTNSLNN.

This sequence belongs to the galactose-1-phosphate uridylyltransferase type 2 family.

Its subcellular location is the cytoplasm. It carries out the reaction alpha-D-galactose 1-phosphate + UDP-alpha-D-glucose = alpha-D-glucose 1-phosphate + UDP-alpha-D-galactose. It functions in the pathway carbohydrate metabolism; galactose metabolism. The protein is Galactose-1-phosphate uridylyltransferase of Clostridium perfringens (strain SM101 / Type A).